The following is a 126-amino-acid chain: uncharacterized protein (126 aa).

Residues 5–25 traverse the membrane as a helical segment; the sequence is LIQHITSIFVFSFFFLFFFFS.

It is found in the membrane. This is an uncharacterized protein from Saccharomyces cerevisiae (strain ATCC 204508 / S288c) (Baker's yeast).